The following is a 1024-amino-acid chain: Carbamoyl phosphate synthase large chain (1024 aa).

Residues 1-396 are carboxyphosphate synthetic domain; it reads MDIKKILVIG…AWQKAVRMID (396 aa). ATP-binding residues include R125, R165, G171, G172, K204, L206, E211, G237, V238, H239, Q280, and E294. Residues 129 to 323 enclose the ATP-grasp 1 domain; sequence QKAMREAGIP…LAYIAAKLAL (195 aa). Positions 280, 294, and 296 each coordinate Mg(2+). Positions 280, 294, and 296 each coordinate Mn(2+). The tract at residues 397-536 is oligomerization domain; the sequence is IGEPGLVGGP…LTYGGQYDDK (140 aa). Positions 536–917 are carbamoyl phosphate synthetic domain; sequence KTPGVDYLVV…LKSWLSATPN (382 aa). The region spanning 660–849 is the ATP-grasp 2 domain; sequence SKLLDRLGIK…YMSLVADVLT (190 aa). Residues R696, K735, E742, G766, V767, H768, S769, Q809, and E820 each contribute to the ATP site. Mg(2+)-binding residues include Q809, E820, and N822. Mn(2+)-binding residues include Q809, E820, and N822. In terms of domain architecture, MGS-like spans 917 to 1024; sequence NKIPSKTALI…KNGKLEVAPW (108 aa). The tract at residues 918–1024 is allosteric domain; it reads KIPSKTALIY…KNGKLEVAPW (107 aa).

This sequence belongs to the CarB family. In terms of assembly, composed of two chains; the small (or glutamine) chain promotes the hydrolysis of glutamine to ammonia, which is used by the large (or ammonia) chain to synthesize carbamoyl phosphate. Tetramer of heterodimers (alpha,beta)4. Requires Mg(2+) as cofactor. Mn(2+) is required as a cofactor.

The enzyme catalyses hydrogencarbonate + L-glutamine + 2 ATP + H2O = carbamoyl phosphate + L-glutamate + 2 ADP + phosphate + 2 H(+). The catalysed reaction is hydrogencarbonate + NH4(+) + 2 ATP = carbamoyl phosphate + 2 ADP + phosphate + 2 H(+). It participates in amino-acid biosynthesis; L-arginine biosynthesis; carbamoyl phosphate from bicarbonate: step 1/1. It functions in the pathway pyrimidine metabolism; UMP biosynthesis via de novo pathway; (S)-dihydroorotate from bicarbonate: step 1/3. In terms of biological role, large subunit of the glutamine-dependent carbamoyl phosphate synthetase (CPSase). CPSase catalyzes the formation of carbamoyl phosphate from the ammonia moiety of glutamine, carbonate, and phosphate donated by ATP, constituting the first step of 2 biosynthetic pathways, one leading to arginine and/or urea and the other to pyrimidine nucleotides. The large subunit (synthetase) binds the substrates ammonia (free or transferred from glutamine from the small subunit), hydrogencarbonate and ATP and carries out an ATP-coupled ligase reaction, activating hydrogencarbonate by forming carboxy phosphate which reacts with ammonia to form carbamoyl phosphate. This chain is Carbamoyl phosphate synthase large chain, found in Pyrobaculum aerophilum (strain ATCC 51768 / DSM 7523 / JCM 9630 / CIP 104966 / NBRC 100827 / IM2).